The primary structure comprises 373 residues: Putative glutamate--cysteine ligase 2-2 (373 aa).

The protein belongs to the glutamate--cysteine ligase type 2 family. YbdK subfamily.

The catalysed reaction is L-cysteine + L-glutamate + ATP = gamma-L-glutamyl-L-cysteine + ADP + phosphate + H(+). In terms of biological role, ATP-dependent carboxylate-amine ligase which exhibits weak glutamate--cysteine ligase activity. The polypeptide is Putative glutamate--cysteine ligase 2-2 (Legionella pneumophila (strain Corby)).